The chain runs to 548 residues: Chaperonin GroEL (548 aa).

Residues 30 to 33 (TLGP), Lys51, 87 to 91 (DGTTT), Gly415, 478 to 480 (NAA), and Asp494 each bind ATP.

Belongs to the chaperonin (HSP60) family. In terms of assembly, forms a cylinder of 14 subunits composed of two heptameric rings stacked back-to-back. Interacts with the co-chaperonin GroES.

It is found in the cytoplasm. The catalysed reaction is ATP + H2O + a folded polypeptide = ADP + phosphate + an unfolded polypeptide.. In terms of biological role, together with its co-chaperonin GroES, plays an essential role in assisting protein folding. The GroEL-GroES system forms a nano-cage that allows encapsulation of the non-native substrate proteins and provides a physical environment optimized to promote and accelerate protein folding. This Janthinobacterium sp. (strain Marseille) (Minibacterium massiliensis) protein is Chaperonin GroEL.